Here is a 236-residue protein sequence, read N- to C-terminus: UPF0257 lipoprotein YnfC (236 aa).

Residues 1–16 (MKYKLLPCLLAIFLTG) form the signal peptide. Cysteine 17 carries N-palmitoyl cysteine lipidation. Residue cysteine 17 is the site of S-diacylglycerol cysteine attachment.

This sequence belongs to the UPF0257 family.

It localises to the cell membrane. The polypeptide is UPF0257 lipoprotein YnfC (ynfC) (Shigella flexneri).